The following is a 125-amino-acid chain: Small ribosomal subunit protein uS13 (125 aa).

The disordered stretch occupies residues 95–125 (GLPLRGQRTKTNARTRKGKRKTVANKKIASK).

This sequence belongs to the universal ribosomal protein uS13 family. As to quaternary structure, part of the 30S ribosomal subunit. Forms a loose heterodimer with protein S19. Forms two bridges to the 50S subunit in the 70S ribosome.

In terms of biological role, located at the top of the head of the 30S subunit, it contacts several helices of the 16S rRNA. In the 70S ribosome it contacts the 23S rRNA (bridge B1a) and protein L5 of the 50S subunit (bridge B1b), connecting the 2 subunits; these bridges are implicated in subunit movement. Contacts the tRNAs in the A and P-sites. In Borreliella burgdorferi (strain ATCC 35210 / DSM 4680 / CIP 102532 / B31) (Borrelia burgdorferi), this protein is Small ribosomal subunit protein uS13.